A 617-amino-acid polypeptide reads, in one-letter code: Dihydroxy-acid dehydratase (617 aa).

Asp-81 contributes to the Mg(2+) binding site. Residue Cys-122 participates in [2Fe-2S] cluster binding. Residues Asp-123 and Lys-124 each coordinate Mg(2+). An N6-carboxylysine modification is found at Lys-124. Residue Cys-195 participates in [2Fe-2S] cluster binding. Glu-492 is a Mg(2+) binding site. The Proton acceptor role is filled by Ser-518.

It belongs to the IlvD/Edd family. Homodimer. It depends on [2Fe-2S] cluster as a cofactor. The cofactor is Mg(2+).

It carries out the reaction (2R)-2,3-dihydroxy-3-methylbutanoate = 3-methyl-2-oxobutanoate + H2O. It catalyses the reaction (2R,3R)-2,3-dihydroxy-3-methylpentanoate = (S)-3-methyl-2-oxopentanoate + H2O. Its pathway is amino-acid biosynthesis; L-isoleucine biosynthesis; L-isoleucine from 2-oxobutanoate: step 3/4. It functions in the pathway amino-acid biosynthesis; L-valine biosynthesis; L-valine from pyruvate: step 3/4. Functionally, functions in the biosynthesis of branched-chain amino acids. Catalyzes the dehydration of (2R,3R)-2,3-dihydroxy-3-methylpentanoate (2,3-dihydroxy-3-methylvalerate) into 2-oxo-3-methylpentanoate (2-oxo-3-methylvalerate) and of (2R)-2,3-dihydroxy-3-methylbutanoate (2,3-dihydroxyisovalerate) into 2-oxo-3-methylbutanoate (2-oxoisovalerate), the penultimate precursor to L-isoleucine and L-valine, respectively. The protein is Dihydroxy-acid dehydratase of Azorhizobium caulinodans (strain ATCC 43989 / DSM 5975 / JCM 20966 / LMG 6465 / NBRC 14845 / NCIMB 13405 / ORS 571).